A 192-amino-acid polypeptide reads, in one-letter code: Erythropoietin (192 aa).

Positions 1 to 25 (MGARDCTPLLMLSFLLFPLGFPVLG) are cleaved as a signal peptide. Intrachain disulfides connect Cys32–Cys187 and Cys54–Cys58. N-linked (GlcNAc...) asparagine glycosylation occurs at Asn49. 2 N-linked (GlcNAc...) asparagine glycosylation sites follow: Asn63 and Asn108.

The protein belongs to the EPO/TPO family. As to expression, produced by kidney or liver of adult mammals and by liver of fetal or neonatal mammals.

The protein localises to the secreted. In terms of biological role, hormone involved in the regulation of erythrocyte proliferation and differentiation and the maintenance of a physiological level of circulating erythrocyte mass. Binds to EPOR leading to EPOR dimerization and JAK2 activation thereby activating specific downstream effectors, including STAT1 and STAT3. The protein is Erythropoietin (EPO) of Bos mutus grunniens (Wild yak).